The chain runs to 168 residues: Cell division inhibitor SulA (168 aa).

The interval 106 to 112 is ftsZ binding; the sequence is ALLTGNY. Residues 161-168 form a lon protease binding region; the sequence is KIHSSLYH.

It belongs to the SulA family. In terms of assembly, interacts with FtsZ. Post-translationally, is rapidly cleaved and degraded by the Lon protease once DNA damage is repaired.

Component of the SOS system and an inhibitor of cell division. Accumulation of SulA causes rapid cessation of cell division and the appearance of long, non-septate filaments. In the presence of GTP, binds a polymerization-competent form of FtsZ in a 1:1 ratio, thus inhibiting FtsZ polymerization and therefore preventing it from participating in the assembly of the Z ring. This mechanism prevents the premature segregation of damaged DNA to daughter cells during cell division. This is Cell division inhibitor SulA from Serratia proteamaculans (strain 568).